The primary structure comprises 82 residues: Sulfur carrier protein TusA (82 aa).

Cys19 serves as the catalytic Cysteine persulfide intermediate.

Belongs to the sulfur carrier protein TusA family.

The protein localises to the cytoplasm. Sulfur carrier protein which probably makes part of a sulfur-relay system. The protein is Sulfur carrier protein TusA of Vibrio campbellii (strain ATCC BAA-1116).